Consider the following 252-residue polypeptide: Adenosylcobinamide-GDP ribazoletransferase (252 aa).

7 helical membrane-spanning segments follow: residues 4-24 (LFKG…PYVE), 38-58 (PIIG…INYL), 60-80 (ISIV…TGML), 113-133 (FSVI…HSFL), 141-161 (ILMF…ITII), 190-210 (LVCI…LLIV), and 232-252 (VAGF…CLFT).

Belongs to the CobS family. It depends on Mg(2+) as a cofactor.

The protein resides in the cell membrane. The enzyme catalyses alpha-ribazole + adenosylcob(III)inamide-GDP = adenosylcob(III)alamin + GMP + H(+). It catalyses the reaction alpha-ribazole 5'-phosphate + adenosylcob(III)inamide-GDP = adenosylcob(III)alamin 5'-phosphate + GMP + H(+). It functions in the pathway cofactor biosynthesis; adenosylcobalamin biosynthesis; adenosylcobalamin from cob(II)yrinate a,c-diamide: step 7/7. In terms of biological role, joins adenosylcobinamide-GDP and alpha-ribazole to generate adenosylcobalamin (Ado-cobalamin). Also synthesizes adenosylcobalamin 5'-phosphate from adenosylcobinamide-GDP and alpha-ribazole 5'-phosphate. This Clostridium botulinum (strain Alaska E43 / Type E3) protein is Adenosylcobinamide-GDP ribazoletransferase.